We begin with the raw amino-acid sequence, 182 residues long: Large ribosomal subunit protein uL6 (182 aa).

It belongs to the universal ribosomal protein uL6 family. Part of the 50S ribosomal subunit.

Functionally, this protein binds to the 23S rRNA, and is important in its secondary structure. It is located near the subunit interface in the base of the L7/L12 stalk, and near the tRNA binding site of the peptidyltransferase center. The sequence is that of Large ribosomal subunit protein uL6 from Haloquadratum walsbyi (strain DSM 16790 / HBSQ001).